A 403-amino-acid chain; its full sequence is S-adenosylmethionine synthase (403 aa).

H16 provides a ligand contact to ATP. D18 is a binding site for Mg(2+). E44 is a binding site for K(+). L-methionine contacts are provided by E57 and Q100. The interval 100 to 110 (QSNDIAQGVDH) is flexible loop. Residues 167–169 (DAK), 238–239 (RF), D247, 253–254 (RK), A270, and K274 contribute to the ATP site. Residue D247 participates in L-methionine binding. K278 is an L-methionine binding site.

The protein belongs to the AdoMet synthase family. In terms of assembly, homotetramer; dimer of dimers. Mg(2+) serves as cofactor. It depends on K(+) as a cofactor.

It localises to the cytoplasm. The catalysed reaction is L-methionine + ATP + H2O = S-adenosyl-L-methionine + phosphate + diphosphate. Its pathway is amino-acid biosynthesis; S-adenosyl-L-methionine biosynthesis; S-adenosyl-L-methionine from L-methionine: step 1/1. Its function is as follows. Catalyzes the formation of S-adenosylmethionine (AdoMet) from methionine and ATP. The overall synthetic reaction is composed of two sequential steps, AdoMet formation and the subsequent tripolyphosphate hydrolysis which occurs prior to release of AdoMet from the enzyme. In Verminephrobacter eiseniae (strain EF01-2), this protein is S-adenosylmethionine synthase.